The following is a 2856-amino-acid chain: Lipopolysaccharide-responsive and beige-like anchor protein (2856 aa).

Disordered regions lie at residues 1–35 (MASE…ALSL) and 939–1107 (EQRK…DDDY). Residue Ala2 is modified to N-acetylalanine. A phosphoserine mark is found at Ser10, Ser979, and Ser1003. Over residues 991–1009 (ENSSIGRASSIDSASNTEL) the composition is skewed to polar residues. A compositionally biased stretch (basic and acidic residues) spans 1010–1026 (QTHDMSSDEKKVERENQ). Low complexity predominate over residues 1073–1082 (SEVSASISSP). Phosphoserine occurs at positions 1097, 1132, 1136, 1219, 1221, 1228, 1244, and 1258. Residues 1253-1296 (FELKASTSTEAPQPQRHGLEISRQQEQTAQGTAPDAVDQQRRDS) form a disordered region. Residues 1274–1283 (SRQQEQTAQG) show a composition bias toward polar residues. The WD 1 repeat unit spans residues 1298–1340 (STMFRIPEFKWSQMHQRLLTDLLFSIETDIQMWRSHSTKTVMD). Phosphoserine occurs at positions 1487 and 1497. Residues 1529-1545 (AQFLALAVVYFISVLMV) form a helical membrane-spanning segment. Disordered stretches follow at residues 1556–1621 (DERH…LGSG) and 1750–1778 (SAVS…SPKC). The span at 1563 to 1573 (LKETSSDNGNA) shows a compositional bias: polar residues. Over residues 1586–1601 (SSLTLSSVEESLEGTS) the composition is skewed to low complexity. Ser1608, Ser1770, Ser1773, and Ser2057 each carry phosphoserine. The BEACH-type PH domain occupies 2066-2174 (NLAGPVSLST…TVKKVVNYLP (109 aa)). The region spanning 2193–2482 (ATPRQLFKAS…QLLIEPHPPR (290 aa)) is the BEACH domain. Ser2489 carries the post-translational modification Phosphoserine. WD repeat units follow at residues 2584–2626 (DQSI…LIQV), 2629–2672 (GHWD…SGIG), 2688–2728 (GHDY…RTLE), 2770–2809 (ETDD…QLFA), and 2812–2851 (GCDA…WHHE).

In terms of assembly, interacts with TOM1 and TOLLIP. In terms of tissue distribution, isoform 1 is expressed in the brain, is absent from the lung and the bone marrow and is less abundant in the spleen. Isoform 2 is expressed in the spleen, lung, brain and bone marrow. Isoform 3 is expressed in the brain, is absent from the bone marrow and is less abundant in the spleen and lung.

It localises to the cell membrane. The protein localises to the endoplasmic reticulum membrane. The protein resides in the golgi apparatus. Its subcellular location is the trans-Golgi network membrane. It is found in the lysosome membrane. Its function is as follows. Involved in coupling signal transduction and vesicle trafficking to enable polarized secretion and/or membrane deposition of immune effector molecules. Involved in phagophore growth during mitophagy by regulating ATG9A trafficking to mitochondria. This Mus musculus (Mouse) protein is Lipopolysaccharide-responsive and beige-like anchor protein (Lrba).